The following is a 93-amino-acid chain: uncharacterized protein (93 aa).

Positions 25–68 (DIKKLSQVKSELEQGKALLEEEKKELIEKNSNLNLQISNMNHLK) form a coiled coil.

This is an uncharacterized protein from Dictyostelium discoideum (Social amoeba).